A 177-amino-acid polypeptide reads, in one-letter code: Isopentenyl-diphosphate Delta-isomerase (177 aa).

Positions 22 and 28 each coordinate Mn(2+). The region spanning 26-160 is the Nudix hydrolase domain; it reads LRHKAISVFV…PERFTPWLRI (135 aa). Residue Cys62 is part of the active site. His64 is a binding site for Mn(2+). Glu82 lines the Mg(2+) pocket. Mn(2+) is bound by residues Glu108 and Glu110. Glu110 is a catalytic residue.

It belongs to the IPP isomerase type 1 family. Mg(2+) serves as cofactor. Mn(2+) is required as a cofactor.

The protein resides in the cytoplasm. It catalyses the reaction isopentenyl diphosphate = dimethylallyl diphosphate. Its pathway is isoprenoid biosynthesis; dimethylallyl diphosphate biosynthesis; dimethylallyl diphosphate from isopentenyl diphosphate: step 1/1. The protein operates within porphyrin-containing compound metabolism; chlorophyll biosynthesis. Catalyzes the 1,3-allylic rearrangement of the homoallylic substrate isopentenyl (IPP) to its highly electrophilic allylic isomer, dimethylallyl diphosphate (DMAPP). This Cereibacter sphaeroides (strain ATCC 17025 / ATH 2.4.3) (Rhodobacter sphaeroides) protein is Isopentenyl-diphosphate Delta-isomerase.